The following is a 338-amino-acid chain: Phenylalanine--tRNA ligase alpha subunit (338 aa).

Mg(2+) is bound at residue Glu-252.

Belongs to the class-II aminoacyl-tRNA synthetase family. Phe-tRNA synthetase alpha subunit type 1 subfamily. In terms of assembly, tetramer of two alpha and two beta subunits. Mg(2+) is required as a cofactor.

Its subcellular location is the cytoplasm. The enzyme catalyses tRNA(Phe) + L-phenylalanine + ATP = L-phenylalanyl-tRNA(Phe) + AMP + diphosphate + H(+). This chain is Phenylalanine--tRNA ligase alpha subunit, found in Pseudomonas aeruginosa (strain ATCC 15692 / DSM 22644 / CIP 104116 / JCM 14847 / LMG 12228 / 1C / PRS 101 / PAO1).